We begin with the raw amino-acid sequence, 446 residues long: CBL-interacting serine/threonine-protein kinase 24 (446 aa).

The Protein kinase domain occupies 11–264; the sequence is YEVGRTIGEG…IQGIKKDPWF (254 aa). ATP is bound by residues 17–25 and Lys-40; that span reads IGEGTFAKV. The Proton acceptor role is filled by Asp-134. The tract at residues 152 to 179 is activation loop; sequence DFGLSALPQEGVELLRTTCGTPNYVAPE. Residue Ser-156 is modified to Phosphoserine. Position 168 is a phosphothreonine (Thr-168). One can recognise an NAF domain in the interval 305-329; it reads EGPLMMNAFEMITLSQGLNLSALFD. A PPI region spans residues 336–365; sequence KRQTRFVSRREPSEIIANIEAVANSMGFKS.

The protein belongs to the protein kinase superfamily. CAMK Ser/Thr protein kinase family. SNF1 subfamily. As to quaternary structure, interacts with CBL1, CBL2, CBL4/SOS3, CBL5, CBL9, CBL10 and with the protein phosphatase 2C ABI2. Requires Mn(2+) as cofactor. Post-translationally, autophosphorylated.

Its subcellular location is the cytoplasm. It is found in the nucleus. It catalyses the reaction L-seryl-[protein] + ATP = O-phospho-L-seryl-[protein] + ADP + H(+). The catalysed reaction is L-threonyl-[protein] + ATP = O-phospho-L-threonyl-[protein] + ADP + H(+). Its function is as follows. Involved in the regulatory pathway for the control of intracellular Na(+) and K(+) homeostasis and salt tolerance. Activates the vacuolar H(+)/Ca(2+) antiporter CAX1 and operates in synergy with CBL4/SOS3 to activate the plasma membrane Na(+)/H(+) antiporter SOS1. CIPK serine-threonine protein kinases interact with CBL proteins. Binding of a CBL protein to the regulatory NAF domain of CIPK protein lead to the activation of the kinase in a calcium-dependent manner. Phosphorylates CBL1, CBL4 and CBL10. The polypeptide is CBL-interacting serine/threonine-protein kinase 24 (CIPK24) (Arabidopsis thaliana (Mouse-ear cress)).